The primary structure comprises 119 residues: Acidic phospholipase A2 DE-III (119 aa).

Cystine bridges form between C11-C72, C26-C118, C28-C44, C43-C99, C50-C92, C60-C85, and C79-C90. Ca(2+) is bound by residues Y27, G29, and G31. The active site involves H47. D48 provides a ligand contact to Ca(2+). The active site involves D93.

It belongs to the phospholipase A2 family. Group I subfamily. D49 sub-subfamily. Ca(2+) is required as a cofactor. In terms of tissue distribution, expressed by the venom gland.

It localises to the secreted. It catalyses the reaction a 1,2-diacyl-sn-glycero-3-phosphocholine + H2O = a 1-acyl-sn-glycero-3-phosphocholine + a fatty acid + H(+). PLA2 catalyzes the calcium-dependent hydrolysis of the 2-acyl groups in 3-sn-phosphoglycerides. The sequence is that of Acidic phospholipase A2 DE-III from Naja melanoleuca (Forest cobra).